The primary structure comprises 312 residues: MRIPVLHDFFIKEQLKSCVSGAVLFDEPLDRYTSMGVGGPADALVVPQSMEELVQLVRFLRKENIPFLTLGNGTNLIVRDGGCRGVVVALRGLQKLSWASDPEGKIRVQAEAGVPLASIVQLCIKESLAGLEFCTGIPGSVGGAVRMNAGAFGREMKDVVTAITVLNEHLELETLSRRELSFEYRRLNLSDEAVIVCAEFALCPGERESISAEISEILALRKSKHPLNFRNAGSIFKNPRNLPAGQLIEETGLKGTRRGDAMISEKHGNFIVNLGHARAADVVDLIEEIKGRVENCRAIQLEAEVHIVGEDG.

Residues 37-205 enclose the FAD-binding PCMH-type domain; it reads VGGPADALVV…VCAEFALCPG (169 aa). Arg185 is an active-site residue. The active-site Proton donor is Ser234. Glu304 is an active-site residue.

This sequence belongs to the MurB family. Requires FAD as cofactor.

The protein localises to the cytoplasm. The catalysed reaction is UDP-N-acetyl-alpha-D-muramate + NADP(+) = UDP-N-acetyl-3-O-(1-carboxyvinyl)-alpha-D-glucosamine + NADPH + H(+). It functions in the pathway cell wall biogenesis; peptidoglycan biosynthesis. In terms of biological role, cell wall formation. This Syntrophus aciditrophicus (strain SB) protein is UDP-N-acetylenolpyruvoylglucosamine reductase.